Reading from the N-terminus, the 260-residue chain is Cell wall synthesis protein Wag31 (260 aa).

The stretch at 31 to 64 forms a coiled coil; the sequence is FLDLVENELTRLIEENSDLRQRINELDQELAAGG. Thr73 carries the phosphothreonine modification. Residues 161 to 196 adopt a coiled-coil conformation; sequence MLADAQSRSEAQLRQAQEKADALQADAERKHSEIMG. The disordered stretch occupies residues 233-260; that stretch reads ELGQRGSAAPVDSNADAGGFDQFNRGKN.

The protein belongs to the DivIVA family. As to quaternary structure, forms homooligomers. Phosphorylated by PknA. Phosphorylation enhances polar localization, which in turn heightens polar peptidoglycan biosynthesis.

The protein resides in the cytoplasm. Functionally, important for maintaining cell shape and cell wall integrity by localizing peptidoglycan synthesis to the cell poles. The chain is Cell wall synthesis protein Wag31 (wag31) from Mycobacterium tuberculosis (strain CDC 1551 / Oshkosh).